The sequence spans 212 residues: Ropporin-1B (212 aa).

The 38-residue stretch at 12–49 (PELPKMLKEFAKAAIRAQPQDLIQWGADYFEALSRGET) folds into the RIIa domain. Phosphoserine is present on Ser-56. Residues 209 to 212 (VWLE) are interaction with RHPN1.

The protein belongs to the ropporin family. As to quaternary structure, homodimer. Interacts with RHPN1. May interact with SPA17. Interacts with AKAP3. Interacts with FSCB; the interaction increases upon spermatozoa capacitation conditions. Sumoylated, sumoylation decreases upon spermatozoa capacitation conditions.

The protein resides in the cell projection. It localises to the cilium. The protein localises to the flagellum. In terms of biological role, important for male fertility. With ROPN1L, involved in fibrous sheath integrity and sperm motility, plays a role in PKA-dependent signaling processes required for spermatozoa capacitation. The polypeptide is Ropporin-1B (ROPN1B) (Homo sapiens (Human)).